We begin with the raw amino-acid sequence, 178 residues long: ATP synthase subunit delta (178 aa).

Belongs to the ATPase delta chain family. In terms of assembly, F-type ATPases have 2 components, F(1) - the catalytic core - and F(0) - the membrane proton channel. F(1) has five subunits: alpha(3), beta(3), gamma(1), delta(1), epsilon(1). F(0) has three main subunits: a(1), b(2) and c(10-14). The alpha and beta chains form an alternating ring which encloses part of the gamma chain. F(1) is attached to F(0) by a central stalk formed by the gamma and epsilon chains, while a peripheral stalk is formed by the delta and b chains.

It is found in the cell inner membrane. Its function is as follows. F(1)F(0) ATP synthase produces ATP from ADP in the presence of a proton or sodium gradient. F-type ATPases consist of two structural domains, F(1) containing the extramembraneous catalytic core and F(0) containing the membrane proton channel, linked together by a central stalk and a peripheral stalk. During catalysis, ATP synthesis in the catalytic domain of F(1) is coupled via a rotary mechanism of the central stalk subunits to proton translocation. Functionally, this protein is part of the stalk that links CF(0) to CF(1). It either transmits conformational changes from CF(0) to CF(1) or is implicated in proton conduction. In Laribacter hongkongensis (strain HLHK9), this protein is ATP synthase subunit delta.